A 624-amino-acid polypeptide reads, in one-letter code: Interleukin-1 receptor-associated kinase-like 2 (624 aa).

The Death domain occupies 13–94 (LDDLCRNIDT…RAAQIVLSWK (82 aa)). A Protein kinase domain is found at 210–475 (FDQSHRISEG…LPEACAETWA (266 aa)). Residues 216–224 (ISEGTFADI), lysine 237, and 337–340 (KSAN) each bind ATP. Disordered stretches follow at residues 508–536 (SLPW…NSSL) and 549–593 (RVSS…ETSW). Residues 558-577 (GNGTAQPSTSGRQEADSSSE) show a composition bias toward polar residues.

It belongs to the protein kinase superfamily. TKL Ser/Thr protein kinase family. Pelle subfamily. In terms of assembly, interacts with MYD88. IL-1 stimulation leads to the formation of a signaling complex which dissociates from the IL-1 receptor following the binding of PELI1.

Functionally, binds to the IL-1 type I receptor following IL-1 engagement, triggering intracellular signaling cascades leading to transcriptional up-regulation and mRNA stabilization. This chain is Interleukin-1 receptor-associated kinase-like 2 (Irak2), found in Rattus norvegicus (Rat).